Reading from the N-terminus, the 612-residue chain is BTB/POZ domain-containing protein 9 (612 aa).

The BTB domain occupies 36 to 104 (GDVTFVVEKK…IYTGRATLTD (69 aa)). A BACK domain is found at 142 to 240 (VCMTFDVASL…SLTELLNVVR (99 aa)). Residues 559–612 (QQSTQKEDSSEEPGTGDLSTPSQQLDPHAPRAPSASSLPPSPGPNLHSPNQQNQ) are disordered. Residues 589 to 612 (RAPSASSLPPSPGPNLHSPNQQNQ) show a composition bias toward low complexity.

As to expression, detected throughout the gray matter of the spinal cord including the motor neurons (at protein level). In the brain, detected in the neurons of the hippocampus and in the Purkinje cells of the cerebellum (at protein level). Also detected in the terospenial cortex, bed nucleus of the stria terminalis (BST) and the ventrolateral thalamus (VL) (at protein level).

The protein is BTB/POZ domain-containing protein 9 (Btbd9) of Rattus norvegicus (Rat).